The sequence spans 418 residues: NADH-quinone oxidoreductase subunit D (418 aa).

Belongs to the complex I 49 kDa subunit family. In terms of assembly, NDH-1 is composed of 14 different subunits. Subunits NuoB, C, D, E, F, and G constitute the peripheral sector of the complex.

It is found in the cell inner membrane. The enzyme catalyses a quinone + NADH + 5 H(+)(in) = a quinol + NAD(+) + 4 H(+)(out). NDH-1 shuttles electrons from NADH, via FMN and iron-sulfur (Fe-S) centers, to quinones in the respiratory chain. The immediate electron acceptor for the enzyme in this species is believed to be ubiquinone. Couples the redox reaction to proton translocation (for every two electrons transferred, four hydrogen ions are translocated across the cytoplasmic membrane), and thus conserves the redox energy in a proton gradient. The protein is NADH-quinone oxidoreductase subunit D of Neisseria meningitidis serogroup B (strain ATCC BAA-335 / MC58).